The sequence spans 271 residues: Shikimate dehydrogenase-like protein HI_0607 (271 aa).

The active-site Proton donor/acceptor is the lysine 67. Residue aspartate 103 coordinates substrate. Residues 126 to 130 (GSGGM), lysine 154, and serine 184 each bind NADP(+).

This sequence belongs to the shikimate dehydrogenase-like family. Homodimer.

The enzyme catalyses shikimate + NADP(+) = 3-dehydroshikimate + NADPH + H(+). Functionally, in vitro, is able to catalyze the NADP(+)-dependent oxidation of shikimate to 3-dehydroshikimate. However, has much lower activity than classical shikimate dehydrogenases AroE, indicating that shikimate may not be the biological substrate. Cannot utilize NAD(+) instead of NADP(+). Is not able to catalyze the oxidation of quinate. The sequence is that of Shikimate dehydrogenase-like protein HI_0607 from Haemophilus influenzae (strain ATCC 51907 / DSM 11121 / KW20 / Rd).